The chain runs to 177 residues: Disulfide bond formation protein B (177 aa).

Residues 1–14 (MMVWNWIDRTPRRV) lie on the Cytoplasmic side of the membrane. Residues 15–31 (LALISLACVALLACGLY) traverse the membrane as a helical segment. At 32 to 49 (LQHVVGLVPCPMCIVQRY) the chain is on the periplasmic side. A disulfide bridge links C41 with C44. The helical transmembrane segment at 50–64 (ALIGLALLTGLASAR) threads the bilayer. Residues 65-70 (SAKGWW) are Cytoplasmic-facing. A helical transmembrane segment spans residues 71–89 (LTLSALAALTAGFGATVAA). The Periplasmic segment spans residues 90-145 (RQSWLQWYPPQSVSCGRDFYGMIESFPLSRAIPMILRGSGDCAAVDWSLLGGSIAN). C104 and C131 form a disulfide bridge. The helical transmembrane segment at 146 to 164 (WSFLCFALLGLLLLALLAR) threads the bilayer. Residues 165–177 (GVRGARQRAPAPV) are Cytoplasmic-facing.

It belongs to the DsbB family.

It localises to the cell inner membrane. Its function is as follows. Required for disulfide bond formation in some periplasmic proteins. Acts by oxidizing the DsbA protein. The polypeptide is Disulfide bond formation protein B (Verminephrobacter eiseniae (strain EF01-2)).